We begin with the raw amino-acid sequence, 224 residues long: 7-cyano-7-deazaguanine synthase (224 aa).

An ATP-binding site is contributed by 12–22; the sequence is MSGGMDSTLGA. Zn(2+) contacts are provided by Cys191, Cys199, Cys202, and Cys205.

It belongs to the QueC family. Requires Zn(2+) as cofactor.

It catalyses the reaction 7-carboxy-7-deazaguanine + NH4(+) + ATP = 7-cyano-7-deazaguanine + ADP + phosphate + H2O + H(+). Its pathway is purine metabolism; 7-cyano-7-deazaguanine biosynthesis. In terms of biological role, catalyzes the ATP-dependent conversion of 7-carboxy-7-deazaguanine (CDG) to 7-cyano-7-deazaguanine (preQ(0)). The polypeptide is 7-cyano-7-deazaguanine synthase (Sulfurimonas denitrificans (strain ATCC 33889 / DSM 1251) (Thiomicrospira denitrificans (strain ATCC 33889 / DSM 1251))).